Here is a 530-residue protein sequence, read N- to C-terminus: Glucose-6-phosphate isomerase (530 aa).

The active-site Proton donor is glutamate 356. Active-site residues include histidine 387 and lysine 502.

Belongs to the GPI family.

It is found in the cytoplasm. It carries out the reaction alpha-D-glucose 6-phosphate = beta-D-fructose 6-phosphate. Its pathway is carbohydrate biosynthesis; gluconeogenesis. The protein operates within carbohydrate degradation; glycolysis; D-glyceraldehyde 3-phosphate and glycerone phosphate from D-glucose: step 2/4. Its function is as follows. Catalyzes the reversible isomerization of glucose-6-phosphate to fructose-6-phosphate. The polypeptide is Glucose-6-phosphate isomerase (Borreliella burgdorferi (strain ATCC 35210 / DSM 4680 / CIP 102532 / B31) (Borrelia burgdorferi)).